The following is a 184-amino-acid chain: Dual-action ribosomal maturation protein DarP (184 aa).

The interval 1–21 (MYKHPDEEWLDEIPGQQENED) is disordered.

It belongs to the DarP family.

It is found in the cytoplasm. Member of a network of 50S ribosomal subunit biogenesis factors which assembles along the 30S-50S interface, preventing incorrect 23S rRNA structures from forming. Promotes peptidyl transferase center (PTC) maturation. This Edwardsiella ictaluri (strain 93-146) protein is Dual-action ribosomal maturation protein DarP.